A 65-amino-acid polypeptide reads, in one-letter code: 7 kDa A-type inclusion protein (65 aa).

Polar residues predominate over residues 1-20; sequence MSNQNIPQLSEYQTSVSQVA. A disordered region spans residues 1 to 32; it reads MSNQNIPQLSEYQTSVSQVAVTPPPKPKTPQI.

This Bos taurus (Bovine) protein is 7 kDa A-type inclusion protein.